A 293-amino-acid polypeptide reads, in one-letter code: Probable xyloglucan endotransglucosylase/hydrolase protein 7 (293 aa).

The first 29 residues, 1–29, serve as a signal peptide directing secretion; sequence MVVSLFSSRNVFYTLSLCLFAALYQPVMS. In terms of domain architecture, GH16 spans 30-223; sequence RPAKFEDDFR…WSRAPFYAYY (194 aa). Glu109 serves as the catalytic Nucleophile. Catalysis depends on Glu113, which acts as the Proton donor. Residue Glu113 participates in xyloglucan binding. Asn117 carries an N-linked (GlcNAc...) asparagine glycan. Residues 126-128, 136-138, 202-203, and Gly207 contribute to the xyloglucan site; these read QTN, DRE, and DW. The N-linked (GlcNAc...) asparagine glycan is linked to Asn213. Intrachain disulfides connect Cys231/Cys239 and Cys276/Cys289. Arg281 is a xyloglucan binding site.

It belongs to the glycosyl hydrolase 16 family. XTH group 1 subfamily. Contains at least one intrachain disulfide bond essential for its enzymatic activity.

It localises to the secreted. The protein resides in the cell wall. It is found in the extracellular space. The protein localises to the apoplast. The enzyme catalyses breaks a beta-(1-&gt;4) bond in the backbone of a xyloglucan and transfers the xyloglucanyl segment on to O-4 of the non-reducing terminal glucose residue of an acceptor, which can be a xyloglucan or an oligosaccharide of xyloglucan.. Catalyzes xyloglucan endohydrolysis (XEH) and/or endotransglycosylation (XET). Cleaves and religates xyloglucan polymers, an essential constituent of the primary cell wall, and thereby participates in cell wall construction of growing tissues. This chain is Probable xyloglucan endotransglucosylase/hydrolase protein 7 (XTH7), found in Arabidopsis thaliana (Mouse-ear cress).